Here is a 124-residue protein sequence, read N- to C-terminus: MKTKVGFNRLDRKSSHRKALLRNMVISLFRHEKITSTKAKLSEVKRFAEKLITRAKVDSVHNRREVSKFIHDKYILNKLFTRISPIFKERKGGYTRVIKLGQRYGDAAEMAILELVDKTLEEKQ.

Belongs to the bacterial ribosomal protein bL17 family. Part of the 50S ribosomal subunit. Contacts protein L32.

This is Large ribosomal subunit protein bL17 from Borrelia turicatae (strain 91E135).